A 1401-amino-acid chain; its full sequence is MKSCGVSLATAAAAAAAAAFGDEEKKMAAGKASGESEEASPSLTAEEREALGGLDSRLFGFVRFHEDGARMKALLGKAVRCYESLILKAEGKVESDFFCQLGHFNLLLEDYPKALSAYQRYYSLQSDYWKNAAFLYGLGLVYFHYNAFQWAIKAFQEVLYVDPSFCRAKEIHLRLGLMFKVNTDYESSLKHFQLALVDCNPCTLSNAEIQFHIAHLYETQRKYHSAKEAYEQLLQTENLSAQVKATILQQLGWMHHTVDLLGDKATKESYAIQYLQKSLEADPNSGQSWYFLGRCYSSIGKVQDAFISYRQSIDKSEASADTWCSIGVLYQQQNQPMDALQAYICAVQLDHGHAAAWMDLGTLYESCNQPQDAIKCYLNATRSKNCSNTSGLAARIKYLQAQLCNLPQGSLQNKTKLLPSIEEAWSLPIPAELTSRQGAMNTAQQNTSDNWSGGNAPPPVEQQTHSWCLTPQKLQHLEQLRANRNNLNPAQKLMLEQLESQFVLMQQHQMRQTGVAQVRPTGILNGPTVDSSLPTNSVSGQQPQLPLTRMPSVSQPGVHTACPRQTLANGPFSAGHVPCSTSRTLGSTDTVLIGNNHVTGSGSNGNVPYLQRNAPTLPHNRTNLTSSTEEPWKNQLSNSTQGLHKGPSSHLAGPNGERPLSSTGPSQHLQAAGSGIQNQNGHPTLPSNSVTQGAALNHLSSHTATSGGQQGITLTKESKPSGNTLTVPETSRQTGETPNSTASVEGLPNHVHQVMADAVCSPSHGDSKSPGLLSSDNPQLSALLMGKANNNVGPGTCDKVNNIHPTVHTKTDNSVASSPSSAISTATPSPKSTEQTTTNSVTSLNSPHSGLHTINGEGMEESQSPIKTDLLLVSHRPSPQIIPSMSVSIYPSSAEVLKACRNLGKNGLSNSSILLDKCPPPRPPSSPYPPLPKDKLNPPTPSIYLENKRDAFFPPLHQFCTNPNNPVTVIRGLAGALKLDLGLFSTKTLVEANNEHMVEVRTQLLQPADENWDPTGTKKIWHCESNRSHTTIAKYAQYQASSFQESLREENEKRSHHKDHSDSESTSSDNSGKRRKGPFKTIKFGTNIDLSDDKKWKLQLHELTKLPAFVRVVSAGNLLSHVGHTILGMNTVQLYMKVPGSRTPGHQENNNFCSVNINIGPGDCEWFVVPEGYWGVLNDFCEKNNLNFLMGSWWPNLEDLYEANVPVYRFIQRPGDLVWINAGTVHWVQAIGWCNNIAWNVGPLTACQYKLAVERYEWNKLQNVKSIVPMVHLSWNMARNIKVSDPKLFEMIKYCLLRTLKQCQTLREALIAAGKEIIWHGRTKEEPAHYCSICEVEVFDLLFVTNESNSRKTYIVHCQDCARKTSGNLENFVVLEQYKMEDLMQVYDQFTLAPPLPSASS.

The interval methionine 1–lysine 1095 is interaction with SUPT6H. TPR repeat units follow at residues serine 95–tyrosine 128, alanine 132–phenylalanine 165, lysine 169–threonine 203, alanine 207–serine 240, alanine 245–serine 285, glycine 286–serine 319, aspartate 321–histidine 353, and alanine 355–serine 387. The segment covering alanine 439–glycine 453 has biased composition (polar residues). Positions alanine 439 to glutamine 463 are disordered. 2 positions are modified to omega-N-methylarginine: arginine 519 and arginine 549. Polar residues-rich tracts occupy residues asparagine 596–asparagine 606, histidine 619–glycine 642, and leucine 660–serine 743. Residues asparagine 596 to glutamate 745 are disordered. A Phosphoserine modification is found at serine 769. 3 disordered regions span residues glycine 795–glutamine 863, leucine 914–proline 941, and phenylalanine 1043–lysine 1080. Low complexity predominate over residues serine 814–threonine 833. Phosphothreonine is present on threonine 827. Phosphoserine is present on serine 829. Polar residues predominate over residues glutamate 834–histidine 848. The span at cysteine 918 to leucine 931 shows a compositional bias: pro residues. The span at serine 1046–serine 1063 shows a compositional bias: basic and acidic residues. The JmjC domain occupies lysine 1095 to tryptophan 1258. Fe cation contacts are provided by histidine 1146, glutamate 1148, and histidine 1226. Positions 1331, 1334, 1358, and 1361 each coordinate Zn(2+).

This sequence belongs to the UTX family. As to quaternary structure, component of the MLL2/3 complex (also named ASCOM complex), at least composed of KMT2D/MLL2 or KMT2C/MLL3, ASH2L, RBBP5, WDR5, NCOA6, DPY30, KDM6A (or KDM6B), PAXIP1/PTIP, PAGR1 and alpha- and beta-tubulin. Interacts with TLE1. Interacts with SUPT6H. Interacts with SMARCA4. Interacts with PROSER1. L-ascorbate is required as a cofactor. It depends on Fe(2+) as a cofactor. Expressed in brain, heart and spleen.

The protein localises to the nucleus. It catalyses the reaction N(6),N(6),N(6)-trimethyl-L-lysyl(27)-[histone H3] + 2 2-oxoglutarate + 2 O2 = N(6)-methyl-L-lysyl(27)-[histone H3] + 2 formaldehyde + 2 succinate + 2 CO2. Histone demethylase that specifically demethylates 'Lys-27' of histone H3, thereby playing a central role in histone code. Demethylates trimethylated and dimethylated but not monomethylated H3 'Lys-27'. Plays a central role in regulation of posterior development, by regulating HOX gene expression. Demethylation of 'Lys-27' of histone H3 is concomitant with methylation of 'Lys-4' of histone H3, and regulates the recruitment of the PRC1 complex and monoubiquitination of histone H2A. Plays a demethylase-independent role in chromatin remodeling to regulate T-box family member-dependent gene expression. The protein is Lysine-specific demethylase 6A (Kdm6a) of Mus musculus (Mouse).